Here is a 102-residue protein sequence, read N- to C-terminus: Type IV secretion system protein PtlA homolog (102 aa).

An N-terminal signal peptide occupies residues Met-1–Ala-31. A run of 2 helical transmembrane segments spans residues Ala-45 to Trp-65 and Val-77 to Ala-97.

It belongs to the PtlA family.

The protein localises to the cell membrane. The polypeptide is Type IV secretion system protein PtlA homolog (ptlA) (Bordetella bronchiseptica (strain ATCC BAA-588 / NCTC 13252 / RB50) (Alcaligenes bronchisepticus)).